We begin with the raw amino-acid sequence, 393 residues long: Pyrimidine monooxygenase RutA (393 aa).

Residues 79-80 (IK), Asn-145, Glu-154, 170-171 (RY), and Ser-220 contribute to the FMN site.

This sequence belongs to the NtaA/SnaA/DszA monooxygenase family. RutA subfamily.

The catalysed reaction is uracil + FMNH2 + NADH + O2 = (Z)-3-ureidoacrylate + FMN + NAD(+) + H2O + H(+). It carries out the reaction thymine + FMNH2 + NADH + O2 = (Z)-2-methylureidoacrylate + FMN + NAD(+) + H2O + H(+). Its function is as follows. Catalyzes the pyrimidine ring opening between N-3 and C-4 by an unusual flavin hydroperoxide-catalyzed mechanism, adding oxygen atoms in the process to yield ureidoacrylate peracid, that immediately reacts with FMN forming ureidoacrylate and FMN-N(5)-oxide. The FMN-N(5)-oxide reacts spontaneously with NADH to produce FMN. Requires the flavin reductase RutF to regenerate FMN in vivo. This Escherichia coli O6:H1 (strain CFT073 / ATCC 700928 / UPEC) protein is Pyrimidine monooxygenase RutA.